Consider the following 422-residue polypeptide: La-related protein 6A (422 aa).

Residues M1 to D94 are disordered. The span at V48–E61 shows a compositional bias: low complexity. Residues D73–N89 are compositionally biased toward basic and acidic residues. The HTH La-type RNA-binding domain maps to V97–R188. The 91-residue stretch at F193–Q283 folds into the RRM domain. Positions G286–V422 are disordered. The span at R295–G348 shows a compositional bias: basic and acidic residues.

Its subcellular location is the nucleus. Functionally, transcriptional regulator. The chain is La-related protein 6A (LARP6A) from Arabidopsis thaliana (Mouse-ear cress).